We begin with the raw amino-acid sequence, 378 residues long: MATAVASQVAVSAPAGSDRGLRSSGIQGSNNISFSNKSWVGTTLAWESKATRPRHANKVLCMSVQQASESKVAVKPLDLESANEPPLNTYKPKEPYTATIVSVERIVGPKAPGETCHIVIDHGGNVPYWEGQSYGIIPPGENPKKPGAPHNVRLYSIASTRYGDSFDGRTTSLCVRRAVYYDPETGKEDPSKNGVCSNFLCNSKPGDKVKVTGPSGKIMLLPEEDPNATHIMIATGTGVAPFRGYLRRMFMEDVPKYRFGGLAWLFLGVANTDSLLYDEEFTSYLKQYPDNFRYDKALSREQKNKNAGKMYVQDKIEEYSDEIFKLLDGGAHIYFCGLKGMMPGIQDTLKKVAEQRGESWEQKLSQLKKNKQWHVEVY.

Over residues 1–17 the composition is skewed to low complexity; that stretch reads MATAVASQVAVSAPAGS. Residues 1-27 form a disordered region; that stretch reads MATAVASQVAVSAPAGSDRGLRSSGIQ. A chloroplast-targeting transit peptide spans 1-62; it reads MATAVASQVA…PRHANKVLCM (62 aa). The FAD-binding FR-type domain maps to 93–221; that stretch reads KEPYTATIVS…TGPSGKIMLL (129 aa). FAD is bound by residues 153–156, 174–176, tyrosine 180, 195–197, and threonine 237; these read RLYS, CVR, and VCS. Positions 156 and 176 each coordinate NADP(+). NADP(+) contacts are provided by residues threonine 237, 269-270, 299-300, lysine 309, 337-338, and glutamate 376; these read VA, SR, and GL.

Belongs to the ferredoxin--NADP reductase type 1 family. FAD is required as a cofactor.

The protein localises to the plastid. It localises to the chloroplast. The enzyme catalyses 2 reduced [2Fe-2S]-[ferredoxin] + NADP(+) + H(+) = 2 oxidized [2Fe-2S]-[ferredoxin] + NADPH. The protein operates within energy metabolism; photosynthesis. May play a key role in regulating the relative amounts of cyclic and non-cyclic electron flow to meet the demands of the plant for ATP and reducing power. Is involved in nitrate assimilation. The sequence is that of Ferredoxin--NADP reductase, root isozyme, chloroplastic from Oryza sativa subsp. japonica (Rice).